Consider the following 299-residue polypeptide: Undecaprenyl-diphosphatase (299 aa).

The next 8 membrane-spanning stretches (helical) occupy residues 10–32, 63–83, 112–132, 143–163, 178–198, 213–233, 243–263, and 276–296; these read LFSL…RNLV, PGVS…IAYF, LAIA…KLFW, LPSI…AESF, GFVV…RSGS, AARF…LVEL, GGVL…WLAI, and WIFV…WLSG.

Belongs to the UppP family.

It localises to the cell inner membrane. It carries out the reaction di-trans,octa-cis-undecaprenyl diphosphate + H2O = di-trans,octa-cis-undecaprenyl phosphate + phosphate + H(+). In terms of biological role, catalyzes the dephosphorylation of undecaprenyl diphosphate (UPP). Confers resistance to bacitracin. In Prochlorococcus marinus (strain MIT 9313), this protein is Undecaprenyl-diphosphatase.